The chain runs to 610 residues: Peptidyl-prolyl cis-trans isomerase 9 (610 aa).

The residue at position 13 (Ser13) is a Phosphoserine. WD repeat units follow at residues 45–83, 88–127, and 177–216; these read MHNA…VEYI, AHNA…LVNI, and KHTA…QKPD. A PPIase cyclophilin-type domain is found at 453–607; the sequence is LGKAAIIHTT…EPTKIINISI (155 aa).

It belongs to the cyclophilin-type PPIase family.

It is found in the nucleus. It carries out the reaction [protein]-peptidylproline (omega=180) = [protein]-peptidylproline (omega=0). PPIases accelerate the folding of proteins. It catalyzes the cis-trans isomerization of proline imidic peptide bonds in oligopeptides. The sequence is that of Peptidyl-prolyl cis-trans isomerase 9 (cyp9) from Schizosaccharomyces pombe (strain 972 / ATCC 24843) (Fission yeast).